The sequence spans 373 residues: MSKLGTLGARLHHGEVGYDFVKNRKIWYGISILITITAIVGLAVRGLHMGIEFQGGAVFTTPKNMSASVAQTETWAEEASGHDAIVQKLGDGSLRIQIAGTDTQQSDQIKEDLSKNLDVSAEKINADLVGPSWGDQIANKAWQGLGIFMVLVVIYLAIAFEWRMALAAFVALIHDITITVGIYALVGFEVTPGTVIGLLTILGYSLYDTVVVFDSLKEQTRDITKQTRWTYAEIANRSINSTLVRSINTTVVALLPVAGLLFIGGGVLGAGMLNDISLSLFVGLAAGAYSSIFIATPLVADLKEAEPQMKALKKRVLAKRAQGAAKGESAESAADEGAYDADEPDDAAPAVVGPRNQPASRGRGRGRPSGKRR.

A run of 6 helical transmembrane segments spans residues 26 to 46 (IWYGISILITITAIVGLAVRG), 142 to 162 (WQGLGIFMVLVVIYLAIAFEW), 166 to 186 (LAAFVALIHDITITVGIYALV), 193 to 213 (GTVIGLLTILGYSLYDTVVVF), 251 to 271 (VVALLPVAGLLFIGGGVLGAG), and 280 to 300 (LFVGLAAGAYSSIFIATPLVA). The span at 322–332 (QGAAKGESAES) shows a compositional bias: low complexity. The disordered stretch occupies residues 322–373 (QGAAKGESAESAADEGAYDADEPDDAAPAVVGPRNQPASRGRGRGRPSGKRR). The span at 333–346 (AADEGAYDADEPDD) shows a compositional bias: acidic residues. Basic residues predominate over residues 362-373 (GRGRGRPSGKRR).

The protein belongs to the SecD/SecF family. SecF subfamily. In terms of assembly, forms a complex with SecD. Part of the essential Sec protein translocation apparatus which comprises SecA, SecYEG and auxiliary proteins SecDF. Other proteins may also be involved.

The protein localises to the cell membrane. In terms of biological role, part of the Sec protein translocase complex. Interacts with the SecYEG preprotein conducting channel. SecDF uses the proton motive force (PMF) to complete protein translocation after the ATP-dependent function of SecA. This Streptomyces coelicolor (strain ATCC BAA-471 / A3(2) / M145) protein is Protein translocase subunit SecF.